Consider the following 225-residue polypeptide: PKHD-type hydroxylase HEAR3399 (225 aa).

In terms of domain architecture, Fe2OG dioxygenase spans 77–177 (RYMPPLFNRY…RVCSFFWLQS (101 aa)). Fe cation contacts are provided by H95, D97, and H158. R168 serves as a coordination point for 2-oxoglutarate.

Fe(2+) serves as cofactor. The cofactor is L-ascorbate.

The protein is PKHD-type hydroxylase HEAR3399 of Herminiimonas arsenicoxydans.